We begin with the raw amino-acid sequence, 201 residues long: Lipopolysaccharide core heptose(II)-phosphate phosphatase (201 aa).

The signal sequence occupies residues 1 to 35; the sequence is MLAFTLRFIKNKRYLATLAGALVIIAGLTSQHAWS.

The protein belongs to the phosphoglycerate mutase family. Ais subfamily.

The protein resides in the periplasm. It participates in bacterial outer membrane biogenesis; lipopolysaccharide metabolism. Catalyzes the dephosphorylation of heptose(II) of the outer membrane lipopolysaccharide core. The chain is Lipopolysaccharide core heptose(II)-phosphate phosphatase from Salmonella heidelberg (strain SL476).